Here is a 178-residue protein sequence, read N- to C-terminus: Large ribosomal subunit protein uL10 (178 aa).

It belongs to the universal ribosomal protein uL10 family. As to quaternary structure, part of the ribosomal stalk of the 50S ribosomal subunit. The N-terminus interacts with L11 and the large rRNA to form the base of the stalk. The C-terminus forms an elongated spine to which L12 dimers bind in a sequential fashion forming a multimeric L10(L12)X complex.

Its function is as follows. Forms part of the ribosomal stalk, playing a central role in the interaction of the ribosome with GTP-bound translation factors. This Mycobacterium tuberculosis (strain ATCC 25177 / H37Ra) protein is Large ribosomal subunit protein uL10.